Here is a 255-residue protein sequence, read N- to C-terminus: MNKRVKDVVDAIVAAVQRVLDQKEVTEAEYRTAVHYLMQVAEQRETALLCDVFFNSTVAATKARISEGSTPAIEGPYYRDDAPLVDDRLKTYDTDDHKPLLIQGTVKAVDGSVVEDVTIDVWHSTPDGKYSGFHDDIPTDFYRGKLRVGTDGSFRVRTTMPVPYQIPDQGPTGALLETMGGHSWRPAHVHFKVKAPGYETLTTQYYFEGGDWITDDCCNGVQSSLITPDIVEEGVRLMNINFVIEPARAQAGANP.

Fe cation-binding residues include Tyr130, Tyr164, His188, and His190.

Belongs to the intradiol ring-cleavage dioxygenase family. Fe(3+) is required as a cofactor.

The catalysed reaction is 3,5-dichlorocatechol + O2 = (2E,4E)-2,4-dichloromuconate + 2 H(+). The protein operates within aromatic compound metabolism; 3-chlorocatechol degradation. Preferentially converts 3,5-dichlorocatechol as opposed to other chlorinated catechols. Retains diminished activity toward non-chlorinated substrates. The polypeptide is Chlorocatechol 1,2-dioxygenase (tfdC) (Burkholderia cepacia (Pseudomonas cepacia)).